Here is a 304-residue protein sequence, read N- to C-terminus: Tetrahydromethanopterin S-methyltransferase subunit E (304 aa).

A run of 6 helical transmembrane segments spans residues 3–23 (PLIG…AGAS), 86–106 (PLFA…TFAV), 131–151 (HTPV…VVSY), 152–172 (LMTV…IWGI), 233–253 (PVTG…TTVF), and 263–283 (WISV…NWKI).

This sequence belongs to the MtrE family. As to quaternary structure, the complex is composed of 8 subunits; MtrA, MtrB, MtrC, MtrD, MtrE, MtrF, MtrG and MtrH.

The protein resides in the cell membrane. It catalyses the reaction 5-methyl-5,6,7,8-tetrahydromethanopterin + coenzyme M + 2 Na(+)(in) = 5,6,7,8-tetrahydromethanopterin + methyl-coenzyme M + 2 Na(+)(out). It participates in one-carbon metabolism; methanogenesis from CO(2); methyl-coenzyme M from 5,10-methylene-5,6,7,8-tetrahydromethanopterin: step 2/2. Its function is as follows. Part of a complex that catalyzes the formation of methyl-coenzyme M and tetrahydromethanopterin from coenzyme M and methyl-tetrahydromethanopterin. This is an energy-conserving, sodium-ion translocating step. In Methanosarcina acetivorans (strain ATCC 35395 / DSM 2834 / JCM 12185 / C2A), this protein is Tetrahydromethanopterin S-methyltransferase subunit E.